The chain runs to 212 residues: MSDFGINLDAICDNVKKGQTESRTGSQLSNRSSRRMDFVDDEELSTYFNSKASVTQSDSCSNDLEIKHSIITEAVVCDESAHVSADAIQEKDETVPQMDHRIMKWMLDSHDGVSLNGGINFTKAKSKLKETENEITEMKSKTNLLVNASVGINSNVGAFNPINQTIKTEAVSDMFEDEDIEGCICKNCPYREKYRKLRSKMKNVLIDMINEM.

Asp-86 serves as a coordination point for Mg(2+).

The protein belongs to the rotavirus NSP5 family. In terms of assembly, homodimer. Interacts with VP1. Interacts with VP2. Interacts with NSP2 and NSP6. Mg(2+) is required as a cofactor. O-glycosylated.

It localises to the host cytoplasm. Its function is as follows. Plays an essential role in the viral genome replication. Participates, together with NSP2, in the formation of viral factories (viroplasms) which are large inclusions in the host cytoplasm where replication intermediates are assembled and viral RNA replication takes place. Orchestrates the recruitment of viroplasmic proteins such as capsid proteins to these factories. The sequence is that of Non-structural protein 5 from Homo sapiens (Human).